A 376-amino-acid polypeptide reads, in one-letter code: Protein-glutamate methylesterase/protein-glutamine glutaminase (376 aa).

The Response regulatory domain maps to 5 to 122 (KVLIVDDSAL…QHTFEDYTDE (118 aa)). Aspartate 56 is modified (4-aspartylphosphate). Positions 185–376 (SKPSHKVIAL…PEKILALIKK (192 aa)) constitute a CheB-type methylesterase domain. Catalysis depends on residues serine 197, histidine 223, and aspartate 319.

It belongs to the CheB family. In terms of processing, phosphorylated by CheA. Phosphorylation of the N-terminal regulatory domain activates the methylesterase activity.

It is found in the cytoplasm. The catalysed reaction is [protein]-L-glutamate 5-O-methyl ester + H2O = L-glutamyl-[protein] + methanol + H(+). The enzyme catalyses L-glutaminyl-[protein] + H2O = L-glutamyl-[protein] + NH4(+). Involved in chemotaxis. Part of a chemotaxis signal transduction system that modulates chemotaxis in response to various stimuli. Catalyzes the demethylation of specific methylglutamate residues introduced into the chemoreceptors (methyl-accepting chemotaxis proteins or MCP) by CheR. Also mediates the irreversible deamidation of specific glutamine residues to glutamic acid. The chain is Protein-glutamate methylesterase/protein-glutamine glutaminase from Hydrogenovibrio crunogenus (strain DSM 25203 / XCL-2) (Thiomicrospira crunogena).